Here is a 313-residue protein sequence, read N- to C-terminus: 4-hydroxy-3-methylbut-2-enyl diphosphate reductase (313 aa).

Position 12 (C12) interacts with [4Fe-4S] cluster. Residues H41 and H74 each contribute to the (2E)-4-hydroxy-3-methylbut-2-enyl diphosphate site. Residues H41 and H74 each coordinate dimethylallyl diphosphate. 2 residues coordinate isopentenyl diphosphate: H41 and H74. C96 contacts [4Fe-4S] cluster. H124 contacts (2E)-4-hydroxy-3-methylbut-2-enyl diphosphate. H124 is a dimethylallyl diphosphate binding site. An isopentenyl diphosphate-binding site is contributed by H124. E126 acts as the Proton donor in catalysis. T164 is a (2E)-4-hydroxy-3-methylbut-2-enyl diphosphate binding site. C194 is a binding site for [4Fe-4S] cluster. The (2E)-4-hydroxy-3-methylbut-2-enyl diphosphate site is built by S222, S223, N224, and S266. Positions 222, 223, 224, and 266 each coordinate dimethylallyl diphosphate. The isopentenyl diphosphate site is built by S222, S223, N224, and S266.

The protein belongs to the IspH family. It depends on [4Fe-4S] cluster as a cofactor.

It carries out the reaction isopentenyl diphosphate + 2 oxidized [2Fe-2S]-[ferredoxin] + H2O = (2E)-4-hydroxy-3-methylbut-2-enyl diphosphate + 2 reduced [2Fe-2S]-[ferredoxin] + 2 H(+). It catalyses the reaction dimethylallyl diphosphate + 2 oxidized [2Fe-2S]-[ferredoxin] + H2O = (2E)-4-hydroxy-3-methylbut-2-enyl diphosphate + 2 reduced [2Fe-2S]-[ferredoxin] + 2 H(+). It functions in the pathway isoprenoid biosynthesis; dimethylallyl diphosphate biosynthesis; dimethylallyl diphosphate from (2E)-4-hydroxy-3-methylbutenyl diphosphate: step 1/1. The protein operates within isoprenoid biosynthesis; isopentenyl diphosphate biosynthesis via DXP pathway; isopentenyl diphosphate from 1-deoxy-D-xylulose 5-phosphate: step 6/6. Functionally, catalyzes the conversion of 1-hydroxy-2-methyl-2-(E)-butenyl 4-diphosphate (HMBPP) into a mixture of isopentenyl diphosphate (IPP) and dimethylallyl diphosphate (DMAPP). Acts in the terminal step of the DOXP/MEP pathway for isoprenoid precursor biosynthesis. This Protochlamydia amoebophila (strain UWE25) protein is 4-hydroxy-3-methylbut-2-enyl diphosphate reductase.